Here is a 413-residue protein sequence, read N- to C-terminus: cAMP-dependent protein kinase regulatory subunit (413 aa).

A disordered region spans residues 1-145; that stretch reads MADSSSFPGT…DSWTPPCHPK (145 aa). The tract at residues 24–161 is dimerization and phosphorylation; sequence SPIQKISEEE…RLKTAVSNNF (138 aa). Positions 58 to 67 are enriched in low complexity; that stretch reads GNSFNGDNGS. Residues 121 to 138 are compositionally biased toward polar residues; sequence TSVSAESLNPTSAGSDSW. At S122 the chain carries Phosphoserine. Residues 162 to 291, E240, R249, 294 to 413, E361, and R370 contribute to the 3',5'-cyclic AMP site; these read LFSH…FLEE and LLSS…PSPS.

This sequence belongs to the cAMP-dependent kinase regulatory chain family. As to quaternary structure, tetramer, composed of 2 regulatory (R) and 2 catalytic (C) subunits. In the presence of cAMP it dissociates into 2 active monomeric C subunits and an R dimer.

The sequence is that of cAMP-dependent protein kinase regulatory subunit (pkaR) from Aspergillus fumigatus (strain ATCC MYA-4609 / CBS 101355 / FGSC A1100 / Af293) (Neosartorya fumigata).